We begin with the raw amino-acid sequence, 204 residues long: Prephenate decarboxylase (204 aa).

The protein belongs to the prephenate decarboxylase family.

The protein resides in the cytoplasm. It carries out the reaction prephenate + H(+) = 3-[(4R)-4-hydroxycyclohexa-1,5-dien-1-yl]-2-oxopropanoate + CO2. It functions in the pathway antibiotic biosynthesis; bacilysin biosynthesis. Part of the bacABCDEF operon responsible for the biosynthesis of the nonribosomally synthesized dipeptide antibiotic bacilysin, composed of L-alanine and L-anticapsin. Bacilysin is an irreversible inactivator of the glutaminase domain of glucosamine synthetase. BacA is an unusual prephenate decarboxylase that avoids the typical aromatization of the cyclohexadienol ring of prephenate. BacA catalyzes the protonation of prephenate (1-carboxy-4-hydroxy-alpha-oxo-2,5-cyclohexadiene-1-propanoic acid) at C6 position, followed by a decarboxylation to produce the endocyclic-delta(4),delta(8)-7R-dihydro-hydroxyphenylpyruvate (en-H2HPP). En-H2HPP is able to undergo a slow nonenzymatic isomerization to produce the exocyclic-delta(3),delta(5)-dihydro-hydroxyphenylpyruvate (ex-H2HPP). BacA isomerizes only the pro-R double bond in prephenate. The sequence is that of Prephenate decarboxylase from Bacillus amyloliquefaciens (Bacillus velezensis).